Consider the following 88-residue polypeptide: EMBRYO SURROUNDING FACTOR 1-like protein 7 (88 aa).

The N-terminal stretch at 1–22 (MKSSHIALICIVMFSLFALHES) is a signal peptide. 4 cysteine pairs are disulfide-bonded: Cys-41-Cys-57, Cys-46-Cys-85, Cys-55-Cys-81, and Cys-58-Cys-68.

It belongs to the MEG family. As to expression, expressed in leaves and flowers.

The chain is EMBRYO SURROUNDING FACTOR 1-like protein 7 (ESFL7) from Arabidopsis thaliana (Mouse-ear cress).